The chain runs to 136 residues: TBK1 inhibitor DP96R (136 aa).

Positions 66 to 86 (NNALEKPAGANNIPEKSAGRM) are disordered.

It belongs to the asfivirus DP96R family.

Functionally, inhibits cGAS-STING-mediated type I IFN expression and NF-kB activation by inhibiting TBK1 and IKBKB/IKKB. Inhibits host TBK1 phosphorylation. The sequence is that of TBK1 inhibitor DP96R from Ornithodoros (relapsing fever ticks).